The primary structure comprises 301 residues: Ankyrin repeat domain-containing protein 29 (301 aa).

8 ANK repeats span residues P11–C41, H45–L74, S78–F107, D111–D140, D144–Q173, D177–A206, D210–I239, and N242–L271.

The chain is Ankyrin repeat domain-containing protein 29 (ANKRD29) from Homo sapiens (Human).